The following is a 77-amino-acid chain: Large ribosomal subunit protein bL28 (77 aa).

The interval 1–21 (MARVCKVTGKRPMTGNNVSHA) is disordered.

Belongs to the bacterial ribosomal protein bL28 family.

This chain is Large ribosomal subunit protein bL28, found in Chromobacterium violaceum (strain ATCC 12472 / DSM 30191 / JCM 1249 / CCUG 213 / NBRC 12614 / NCIMB 9131 / NCTC 9757 / MK).